Reading from the N-terminus, the 182-residue chain is uncharacterized protein (182 aa).

Residues 1–29 (MKKLLKKLVVLFLSSLVIIFNVWYFIICA) form the signal peptide. The helical transmembrane segment at 152-174 (WNLYFWTAASYNAVIFVFVLVIV) threads the bilayer.

It is found in the membrane. This is an uncharacterized protein from Bacillus subtilis (strain 168).